We begin with the raw amino-acid sequence, 571 residues long: Proline--tRNA ligase (571 aa).

It belongs to the class-II aminoacyl-tRNA synthetase family. ProS type 1 subfamily. Homodimer.

The protein localises to the cytoplasm. It carries out the reaction tRNA(Pro) + L-proline + ATP = L-prolyl-tRNA(Pro) + AMP + diphosphate. Functionally, catalyzes the attachment of proline to tRNA(Pro) in a two-step reaction: proline is first activated by ATP to form Pro-AMP and then transferred to the acceptor end of tRNA(Pro). As ProRS can inadvertently accommodate and process non-cognate amino acids such as alanine and cysteine, to avoid such errors it has two additional distinct editing activities against alanine. One activity is designated as 'pretransfer' editing and involves the tRNA(Pro)-independent hydrolysis of activated Ala-AMP. The other activity is designated 'posttransfer' editing and involves deacylation of mischarged Ala-tRNA(Pro). The misacylated Cys-tRNA(Pro) is not edited by ProRS. The sequence is that of Proline--tRNA ligase from Vibrio cholerae serotype O1 (strain ATCC 39541 / Classical Ogawa 395 / O395).